Reading from the N-terminus, the 324-residue chain is tRNA dimethylallyltransferase (324 aa).

17 to 24 (GPTASGKT) serves as a coordination point for ATP. 19 to 24 (TASGKT) is a binding site for substrate. 3 interaction with substrate tRNA regions span residues 42–45 (DSAL), 166–170 (QRIQR), and 251–256 (RCVGYR).

This sequence belongs to the IPP transferase family. Monomer. Mg(2+) serves as cofactor.

It carries out the reaction adenosine(37) in tRNA + dimethylallyl diphosphate = N(6)-dimethylallyladenosine(37) in tRNA + diphosphate. Catalyzes the transfer of a dimethylallyl group onto the adenine at position 37 in tRNAs that read codons beginning with uridine, leading to the formation of N6-(dimethylallyl)adenosine (i(6)A). The protein is tRNA dimethylallyltransferase of Burkholderia pseudomallei (strain 668).